The primary structure comprises 139 residues: Natriuretic peptides A (139 aa).

The signal sequence occupies residues 1-21; sequence MTALVLWGLLLLLGQHTQVNS. Residues 22–114 constitute a propeptide that is removed on maturation; the sequence is HVLGRPFSAS…QDLLMSLRKR (93 aa). The cysteines at positions 118 and 134 are disulfide-linked.

This sequence belongs to the natriuretic peptide family.

The protein resides in the secreted. Hormone playing a key role in cardiovascular homeostasis through regulation of natriuresis, diuresis, and vasodilation. Has a cGMP-stimulating activity. This is Natriuretic peptides A (nppa) from Takifugu rubripes (Japanese pufferfish).